Here is a 102-residue protein sequence, read N- to C-terminus: PE family immunomodulator PE15 (102 aa).

The PE domain maps to 3–91 (LRVVPESLAG…SGASYAARDA (89 aa)).

The protein belongs to the mycobacterial PE family.

The protein resides in the secreted. Its subcellular location is the cell envelope. The protein localises to the cell surface. Its function is as follows. May play a pivotal role in the evasion of host immune response by M.tuberculosis. Mediates production of IL-10 via activation of the p38 and ERK1/2 mitogen-activated protein kinase (MAPK) signaling pathways. In Mycobacterium tuberculosis (strain CDC 1551 / Oshkosh), this protein is PE family immunomodulator PE15 (PE15).